Here is a 206-residue protein sequence, read N- to C-terminus: Ribosomal RNA small subunit methyltransferase G (206 aa).

S-adenosyl-L-methionine is bound by residues G73, L78, 124–125, and R139; that span reads VE.

It belongs to the methyltransferase superfamily. RNA methyltransferase RsmG family.

It is found in the cytoplasm. The enzyme catalyses guanosine(527) in 16S rRNA + S-adenosyl-L-methionine = N(7)-methylguanosine(527) in 16S rRNA + S-adenosyl-L-homocysteine. Its function is as follows. Specifically methylates the N7 position of guanine in position 527 of 16S rRNA. In Yersinia enterocolitica serotype O:8 / biotype 1B (strain NCTC 13174 / 8081), this protein is Ribosomal RNA small subunit methyltransferase G.